Here is a 442-residue protein sequence, read N- to C-terminus: Protein PHYTOCHROME KINASE SUBSTRATE 2 (442 aa).

A disordered region spans residues 110–130 (IFVGPKQSSKNSSETPSLRSE). Over residues 121-130 (SSETPSLRSE) the composition is skewed to low complexity. Phosphoserine occurs at positions 239 and 245. Residues 394–442 (VSGDSYTSMNRTPSYVPRFPVEANPTSTETRRRISSSSVSHTQSPFLYT) are disordered. Polar residues predominate over residues 397-406 (DSYTSMNRTP). Residues 428–442 (SSSSVSHTQSPFLYT) are compositionally biased toward low complexity.

It belongs to the PKS family. Interacts with PKS1, RPT3, PHOT1 and PHOT2. As to expression, expressed in leaves, with the strongest expression on edges of the laminas. Not found in roots.

It is found in the cell membrane. Functionally, acts predominantly in the phot1 pathway. Involved in the leaf positioning and also in the phot2 pathway controlling the leaf flattening. Component of the network that modulates the very low-fluence response (VLFR) branch of phyA signaling. Regulates phytochrome-mediated photomorphogenesis and hypocotyl phototropism. May act by controlling auxin homeostasis. In Arabidopsis thaliana (Mouse-ear cress), this protein is Protein PHYTOCHROME KINASE SUBSTRATE 2 (PKS2).